Reading from the N-terminus, the 401-residue chain is Homocitrate synthase (401 aa).

One can recognise a Pyruvate carboxyltransferase domain in the interval 22 to 271 (VRFCDTTLRD…KLPIDLDTTS (250 aa)). The tract at residues 367 to 401 (TRHKRGLDSRDLPGTSRAGRDAGPRAGTPTREEPV) is disordered.

The protein belongs to the alpha-IPM synthase/homocitrate synthase family.

It catalyses the reaction acetyl-CoA + 2-oxoglutarate + H2O = (2R)-homocitrate + CoA + H(+). Functionally, this protein is a Fe-Mo-cofactor biosynthetic component. This Frankia sp. (strain FaC1) protein is Homocitrate synthase (nifV).